A 253-amino-acid polypeptide reads, in one-letter code: Imidazole glycerol phosphate synthase subunit HisF (253 aa).

Catalysis depends on residues aspartate 11 and aspartate 130.

It belongs to the HisA/HisF family. In terms of assembly, heterodimer of HisH and HisF.

Its subcellular location is the cytoplasm. The enzyme catalyses 5-[(5-phospho-1-deoxy-D-ribulos-1-ylimino)methylamino]-1-(5-phospho-beta-D-ribosyl)imidazole-4-carboxamide + L-glutamine = D-erythro-1-(imidazol-4-yl)glycerol 3-phosphate + 5-amino-1-(5-phospho-beta-D-ribosyl)imidazole-4-carboxamide + L-glutamate + H(+). It functions in the pathway amino-acid biosynthesis; L-histidine biosynthesis; L-histidine from 5-phospho-alpha-D-ribose 1-diphosphate: step 5/9. IGPS catalyzes the conversion of PRFAR and glutamine to IGP, AICAR and glutamate. The HisF subunit catalyzes the cyclization activity that produces IGP and AICAR from PRFAR using the ammonia provided by the HisH subunit. This Dehalococcoides mccartyi (strain ATCC BAA-2100 / JCM 16839 / KCTC 5957 / BAV1) protein is Imidazole glycerol phosphate synthase subunit HisF.